Consider the following 44-residue polypeptide: Small, acid-soluble spore protein P (44 aa).

The disordered stretch occupies residues 1-44; it reads MSHTMGKNNREAKEKKGQPEPLSGSHKVKNRNHSRQKHHAHHDM. A compositionally biased stretch (basic and acidic residues) spans 8 to 18; it reads NNREAKEKKGQ. Positions 26-44 are enriched in basic residues; sequence HKVKNRNHSRQKHHAHHDM.

This sequence belongs to the SspP family.

The protein localises to the spore core. The sequence is that of Small, acid-soluble spore protein P from Bacillus cereus (strain ATCC 14579 / DSM 31 / CCUG 7414 / JCM 2152 / NBRC 15305 / NCIMB 9373 / NCTC 2599 / NRRL B-3711).